We begin with the raw amino-acid sequence, 152 residues long: Protein SprT-like (152 aa).

The SprT-like domain maps to Gln-7–Ile-148. Position 67 (His-67) interacts with Zn(2+). Residue Glu-68 is part of the active site. His-71 lines the Zn(2+) pocket.

It belongs to the SprT family. It depends on Zn(2+) as a cofactor.

It localises to the cytoplasm. This is Protein SprT-like from Bacillus cereus (strain ATCC 10987 / NRS 248).